The chain runs to 335 residues: Anthranilate phosphoribosyltransferase (335 aa).

5-phospho-alpha-D-ribose 1-diphosphate contacts are provided by residues G79, 82–83 (GD), T87, 89–92 (NIST), 107–115 (KHGNRSASS), and A119. G79 contacts anthranilate. S91 is a Mg(2+) binding site. N110 serves as a coordination point for anthranilate. R165 serves as a coordination point for anthranilate. Mg(2+)-binding residues include D224 and E225.

Belongs to the anthranilate phosphoribosyltransferase family. Homodimer. Requires Mg(2+) as cofactor.

It carries out the reaction N-(5-phospho-beta-D-ribosyl)anthranilate + diphosphate = 5-phospho-alpha-D-ribose 1-diphosphate + anthranilate. The protein operates within amino-acid biosynthesis; L-tryptophan biosynthesis; L-tryptophan from chorismate: step 2/5. In terms of biological role, catalyzes the transfer of the phosphoribosyl group of 5-phosphorylribose-1-pyrophosphate (PRPP) to anthranilate to yield N-(5'-phosphoribosyl)-anthranilate (PRA). The chain is Anthranilate phosphoribosyltransferase from Methanobrevibacter smithii (strain ATCC 35061 / DSM 861 / OCM 144 / PS).